The following is a 230-amino-acid chain: Nucleoside diphosphate kinase 2, chloroplastic (230 aa).

A chloroplast-targeting transit peptide spans 1–64 (MEAMAVFSGS…SYPKTFRTRS (64 aa)). Positions 90, 138, 166, 172, 183, and 193 each coordinate ATP. His-196 functions as the Pros-phosphohistidine intermediate in the catalytic mechanism.

Belongs to the NDK family. Mg(2+) serves as cofactor.

The protein resides in the plastid. It localises to the chloroplast. The catalysed reaction is a 2'-deoxyribonucleoside 5'-diphosphate + ATP = a 2'-deoxyribonucleoside 5'-triphosphate + ADP. It carries out the reaction a ribonucleoside 5'-diphosphate + ATP = a ribonucleoside 5'-triphosphate + ADP. Major role in the synthesis of nucleoside triphosphates other than ATP. The ATP gamma phosphate is transferred to the NDP beta phosphate via a ping-pong mechanism, using a phosphorylated active-site intermediate. In Pisum sativum (Garden pea), this protein is Nucleoside diphosphate kinase 2, chloroplastic (NDPK2).